We begin with the raw amino-acid sequence, 114 residues long: Nucleoid-associated protein Cyan7425_0899 (114 aa).

It belongs to the YbaB/EbfC family. In terms of assembly, homodimer.

The protein localises to the cytoplasm. It localises to the nucleoid. Its function is as follows. Binds to DNA and alters its conformation. May be involved in regulation of gene expression, nucleoid organization and DNA protection. This is Nucleoid-associated protein Cyan7425_0899 from Cyanothece sp. (strain PCC 7425 / ATCC 29141).